A 243-amino-acid polypeptide reads, in one-letter code: MSNSHYNNYQQQQPHSSNGDPEYQHQQMVHQPQRFSNGHGMKTVAVPDMCLFCFEVLDCELNNVDGPSVPVFSNDAYPLFVTWKIGRDKRLRGCIGTFSAMELHHGLREYALTSAFKDSRFAPISRDELPRLTVSVSILQNFEEAQGHLDWQLGVHGIRIEFLTERGCKRTATYLPQVATEQGWDQLQTIDSLLRKGGYRAAITPETRKSIKLTRYRSQEIQMHYKEYREYQERRAQFGKVQC.

The segment covering 1–18 (MSNSHYNNYQQQQPHSSN) has biased composition (low complexity). The tract at residues 1-30 (MSNSHYNNYQQQQPHSSNGDPEYQHQQMVH) is disordered. In terms of domain architecture, AMMECR1 spans 38-232 (GHGMKTVAVP…MHYKEYREYQ (195 aa)).

This is an uncharacterized protein from Drosophila melanogaster (Fruit fly).